Reading from the N-terminus, the 412-residue chain is COP9 signalosome complex subunit 4 (412 aa).

The PCI domain occupies 216-378; that stretch reads EAAQRYYELS…GILHFEDSNP (163 aa).

It belongs to the CSN4 family. In terms of assembly, component of the CSN complex, probably composed of csn-1, csn-2, csn-3, csn-4, csn-5, csn-6 and csn-7. Within the complex it probably interacts directly with csn-2 and csn-4. In the complex, it probably interacts directly with csn-1, csn-2, csn-3 and csn-6. Interacts with itself.

It is found in the cytoplasm. The protein localises to the nucleus. Functionally, component of the COP9 signalosome complex (CSN), a complex involved in various cellular and developmental processes. The CSN complex is an essential regulator of the ubiquitin (Ubl) conjugation pathway by mediating the deneddylation of the cullin subunits of the SCF-type E3 ligase complexes, leading to decrease the Ubl ligase activity of SCF. The CSN complex plays an essential role in embryogenesis and oogenesis and is required to regulate microtubule stability in the early embryo. Mediates mei-3/katanin targeting for degradation at the meiosis to mitosis transition via deneddylation of cul-3. In Caenorhabditis elegans, this protein is COP9 signalosome complex subunit 4 (csn-4).